The following is a 548-amino-acid chain: Eukaryotic translation initiation factor 3 subunit D (548 aa).

Lys-53 bears the N6-acetyllysine mark. At Ser-161 the chain carries Phosphoserine. Residues 285–299 form an RNA gate region; sequence DFDLLTVSETANEPP. A disordered region spans residues 523–548; that stretch reads PDGTFSSDEDDEEEEEEEEEEEEEEA. Ser-528 and Ser-529 each carry phosphoserine. Acidic residues predominate over residues 529–548; it reads SDEDDEEEEEEEEEEEEEEA.

The protein belongs to the eIF-3 subunit D family. Component of the eukaryotic translation initiation factor 3 (eIF-3) complex, which is composed of 13 subunits: EIF3A, EIF3B, EIF3C, EIF3D, EIF3E, EIF3F, EIF3G, EIF3H, EIF3I, EIF3J, EIF3K, EIF3L and EIF3M. The eIF-3 complex appears to include 3 stable modules: module A is composed of EIF3A, EIF3B, EIF3G and EIF3I; module B is composed of EIF3F, EIF3H, and EIF3M; and module C is composed of EIF3C, EIF3D, EIF3E, EIF3K and EIF3L. EIF3C of module C binds EIF3B of module A and EIF3H of module B, thereby linking the three modules. EIF3J is a labile subunit that binds to the eIF-3 complex via EIF3B. The eIF-3 complex interacts with RPS6KB1 under conditions of nutrient depletion. Mitogenic stimulation leads to binding and activation of a complex composed of MTOR and RPTOR, leading to phosphorylation and release of RPS6KB1 and binding of EIF4B to eIF-3.

It is found in the cytoplasm. Its function is as follows. mRNA cap-binding component of the eukaryotic translation initiation factor 3 (eIF-3) complex, a complex required for several steps in the initiation of protein synthesis of a specialized repertoire of mRNAs. The eIF-3 complex associates with the 40S ribosome and facilitates the recruitment of eIF-1, eIF-1A, eIF-2:GTP:methionyl-tRNAi and eIF-5 to form the 43S pre-initiation complex (43S PIC). The eIF-3 complex stimulates mRNA recruitment to the 43S PIC and scanning of the mRNA for AUG recognition. The eIF-3 complex is also required for disassembly and recycling of post-termination ribosomal complexes and subsequently prevents premature joining of the 40S and 60S ribosomal subunits prior to initiation. The eIF-3 complex specifically targets and initiates translation of a subset of mRNAs involved in cell proliferation, including cell cycling, differentiation and apoptosis, and uses different modes of RNA stem-loop binding to exert either translational activation or repression. In the eIF-3 complex, EIF3D specifically recognizes and binds the 7-methylguanosine cap of a subset of mRNAs. This is Eukaryotic translation initiation factor 3 subunit D from Bos taurus (Bovine).